Reading from the N-terminus, the 26-residue chain is Neprilysin (26 aa).

The protein belongs to the peptidase M13 family. Requires Zn(2+) as cofactor.

The protein localises to the cell membrane. The catalysed reaction is Preferential cleavage of polypeptides between hydrophobic residues, particularly with Phe or Tyr at P1'.. It carries out the reaction substance P + H2O = substance P(1-9) + L-Leu-L-Met-NH2. The enzyme catalyses substance P + H2O = substance P(1-7) + L-Phe-Gly-L-Leu-L-Met-NH2. It catalyses the reaction neurotensin + H2O = neurotensin(1-11) + L-isoleucyl-L-leucine. The catalysed reaction is neurotensin + H2O = neurotensin(1-10) + L-tyrosyl-L-isoleucyl-L-leucine. In terms of biological role, thermolysin-like specificity, but is almost confined on acting on polypeptides of up to 30 amino acids. Biologically important in the destruction of opioid peptides such as Met- and Leu-enkephalins by cleavage of a Gly-Phe bond. Catalyzes cleavage of bradykinin, substance P and neurotensin peptides. Able to cleave angiotensin-1, angiotensin-2 and angiotensin 1-9. Involved in the degradation of atrial natriuretic factor (ANF) and brain natriuretic factor (BNP(1-32)). Displays UV-inducible elastase activity toward skin preelastic and elastic fibers. This chain is Neprilysin (MME), found in Sus scrofa (Pig).